The following is a 337-amino-acid chain: MAQELKLGYKASAEQFGPRELVELAVLAEQHGMDSVAVSDHFQPWRHNGGHAPFSLAWMTAVGERTERVQIGTSVMTPTFRYNPAVIAQAFATMGCLYPGRIMLGVGSGEALNEIATGFQGEWPEFKERFARLRESVRLMRELWLGDRVDFEGEYFTTRGASIYDVPEGGIPVYIAAGGPVVARYAGRAGDGFICTSGKGMELYTEKLLPAVAEGAAKAERDVADIDKMIEIKISYDTDPEAALENTRFWAPLSLTPEQKHSIEDPIEMEAAADALPIEQVAKRWIVASDPDDAVEQVKAYVDAGLNHLVFHAPGHDQRRFLELFERDLAPRLRALG.

Aspartate 40 lines the coenzyme F420-(gamma-Glu)n pocket. Histidine 41 acts as the Proton donor in catalysis. Coenzyme F420-(gamma-Glu)n contacts are provided by residues threonine 77 and 108–109; that span reads SG. The Proton acceptor role is filled by glutamate 110. Coenzyme F420-(gamma-Glu)n is bound by residues asparagine 113, 178–179, and 181–182; these read GG and VV. 4 residues coordinate substrate: threonine 196, lysine 199, lysine 260, and arginine 284.

This sequence belongs to the F420-dependent glucose-6-phosphate dehydrogenase family. Homodimer.

It catalyses the reaction oxidized coenzyme F420-(gamma-L-Glu)(n) + D-glucose 6-phosphate + H(+) = 6-phospho-D-glucono-1,5-lactone + reduced coenzyme F420-(gamma-L-Glu)(n). Its function is as follows. Catalyzes the coenzyme F420-dependent oxidation of glucose 6-phosphate (G6P) to 6-phosphogluconolactone. In Rhodococcus erythropolis (strain PR4 / NBRC 100887), this protein is F420-dependent glucose-6-phosphate dehydrogenase.